A 178-amino-acid chain; its full sequence is Single-stranded DNA-binding protein DdrB (178 aa).

Positions 139–178 (RYAVPGSNRPQAGAPARSAATRAQGARPGAVAVQDEETPF) are disordered. Low complexity predominate over residues 147-165 (RPQAGAPARSAATRAQGAR).

As to quaternary structure, homopentamer; arranged in a ring-structure.

SsDNA-binding protein that probably contributes to the ionizing radiation resistance of D.geothermalis. Plays a role in DNA repair and genome reconstitution, in a RecA-independent process, and is necessary for recovery from severe genomic fragmentation as a result of exposure to severe levels of ionizing radiation. Binds single-stranded DNA but not duplex DNA. The polypeptide is Single-stranded DNA-binding protein DdrB (ddrB) (Deinococcus geothermalis (strain DSM 11300 / CIP 105573 / AG-3a)).